Here is a 208-residue protein sequence, read N- to C-terminus: MVYFYESKPTEYSTPYQIVMGKDKFENDLLIKWSYRELNYVWFHADKYSSGHVYLKLRPNEKTIDDIPQEVICDCLQLCKSESIQGNKMPQCTILITPWHNLRKNRYMNPGEVSFKSLRQCRKMECGARDNKILNRLAKTRVELFNNVEATLNEAKKTKNGDFFVNYIESNRSNLIEEEKLRKVAKKNQKKKNKQSKDEVTDDMQLEV.

The segment covering 185-194 (AKKNQKKKNK) has biased composition (basic residues). Residues 185 to 208 (AKKNQKKKNKQSKDEVTDDMQLEV) are disordered.

This sequence belongs to the CCDC25 family.

The protein resides in the cytoplasm. The protein is Protein JLP2 (JLP2) of Saccharomyces cerevisiae (strain ATCC 204508 / S288c) (Baker's yeast).